The primary structure comprises 220 residues: Probable nicotinate-nucleotide adenylyltransferase (220 aa).

Belongs to the NadD family.

It catalyses the reaction nicotinate beta-D-ribonucleotide + ATP + H(+) = deamido-NAD(+) + diphosphate. It participates in cofactor biosynthesis; NAD(+) biosynthesis; deamido-NAD(+) from nicotinate D-ribonucleotide: step 1/1. Its function is as follows. Catalyzes the reversible adenylation of nicotinate mononucleotide (NaMN) to nicotinic acid adenine dinucleotide (NaAD). In Yersinia enterocolitica serotype O:8 / biotype 1B (strain NCTC 13174 / 8081), this protein is Probable nicotinate-nucleotide adenylyltransferase.